The chain runs to 133 residues: Agouti-signaling protein (133 aa).

The first 22 residues, 1 to 22 (MDVSRLLLATLLVCLCFLTAYS), serve as a signal peptide directing secretion. N-linked (GlcNAc...) asparagine glycosylation is present at N39. The interval 56–95 (NKKSKKISRNEAEKKKRPSKRKAPMKNVARTRPPPPTPCV) is disordered. A compositionally biased stretch (basic residues) spans 70–79 (KKRPSKRKAP). 5 disulfide bridges follow: C94/C109, C101/C115, C108/C126, C112/C133, and C117/C124. Residues 94 to 133 (CVATRDSCKPPAPACCDPCAFCQCRFFRSACSCRVLNPTC) form the Agouti domain.

It is found in the secreted. Functionally, involved in the regulation of melanogenesis. The binding of ASP to MC1R precludes alpha-MSH initiated signaling and thus blocks production of cAMP, leading to a down-regulation of eumelanogenesis (brown/black pigment) and thus increasing synthesis of pheomelanin (yellow/red pigment). In Bos taurus (Bovine), this protein is Agouti-signaling protein (ASIP).